The primary structure comprises 100 residues: MAPPTCRLLSAALVLLLLLATNHQATGAVVASELRCQCLKTLPRVDFKNIQSLSVTPPGPHCAQTEVIATLKGGQKVCLDPEAPLVQKIIQKILNKGKAN.

An N-terminal signal peptide occupies residues 1–27 (MAPPTCRLLSAALVLLLLLATNHQATG). 2 cysteine pairs are disulfide-bonded: C36–C62 and C38–C78.

Belongs to the intercrine alpha (chemokine CxC) family. As to quaternary structure, homotetramer.

Its subcellular location is the secreted. Functionally, chemotactic for human polymorphonuclear leukocytes but does not induce chemokinesis or an oxidative burst. The sequence is that of C-X-C motif chemokine 2 (Cxcl2) from Mus musculus (Mouse).